Reading from the N-terminus, the 805-residue chain is Leucine--tRNA ligase (805 aa).

Positions 40–51 (PYPSGSGLHVGH) match the 'HIGH' region motif. The 'KMSKS' region signature appears at 576 to 580 (KMSKS). ATP is bound at residue Lys579.

The protein belongs to the class-I aminoacyl-tRNA synthetase family.

Its subcellular location is the cytoplasm. The catalysed reaction is tRNA(Leu) + L-leucine + ATP = L-leucyl-tRNA(Leu) + AMP + diphosphate. This Chlorobium luteolum (strain DSM 273 / BCRC 81028 / 2530) (Pelodictyon luteolum) protein is Leucine--tRNA ligase.